Here is a 167-residue protein sequence, read N- to C-terminus: Small ribosomal subunit protein uS5 (167 aa).

The S5 DRBM domain occupies 11–74; the sequence is LQEKLIAVNR…DKARRNMTTI (64 aa).

This sequence belongs to the universal ribosomal protein uS5 family. In terms of assembly, part of the 30S ribosomal subunit. Contacts proteins S4 and S8.

With S4 and S12 plays an important role in translational accuracy. Its function is as follows. Located at the back of the 30S subunit body where it stabilizes the conformation of the head with respect to the body. This is Small ribosomal subunit protein uS5 from Baumannia cicadellinicola subsp. Homalodisca coagulata.